We begin with the raw amino-acid sequence, 356 residues long: UDP-N-acetylglucosamine--N-acetylmuramyl-(pentapeptide) pyrophosphoryl-undecaprenol N-acetylglucosamine transferase (356 aa).

UDP-N-acetyl-alpha-D-glucosamine-binding positions include 12–14, N124, R163, S188, I242, 261–266, and Q287; these read TGG and ALTVSE.

The protein belongs to the glycosyltransferase 28 family. MurG subfamily.

Its subcellular location is the cell inner membrane. The enzyme catalyses di-trans,octa-cis-undecaprenyl diphospho-N-acetyl-alpha-D-muramoyl-L-alanyl-D-glutamyl-meso-2,6-diaminopimeloyl-D-alanyl-D-alanine + UDP-N-acetyl-alpha-D-glucosamine = di-trans,octa-cis-undecaprenyl diphospho-[N-acetyl-alpha-D-glucosaminyl-(1-&gt;4)]-N-acetyl-alpha-D-muramoyl-L-alanyl-D-glutamyl-meso-2,6-diaminopimeloyl-D-alanyl-D-alanine + UDP + H(+). It participates in cell wall biogenesis; peptidoglycan biosynthesis. Its function is as follows. Cell wall formation. Catalyzes the transfer of a GlcNAc subunit on undecaprenyl-pyrophosphoryl-MurNAc-pentapeptide (lipid intermediate I) to form undecaprenyl-pyrophosphoryl-MurNAc-(pentapeptide)GlcNAc (lipid intermediate II). This Ectopseudomonas mendocina (strain ymp) (Pseudomonas mendocina) protein is UDP-N-acetylglucosamine--N-acetylmuramyl-(pentapeptide) pyrophosphoryl-undecaprenol N-acetylglucosamine transferase.